Reading from the N-terminus, the 103-residue chain is Large ribosomal subunit protein bL21 (103 aa).

It belongs to the bacterial ribosomal protein bL21 family. Part of the 50S ribosomal subunit. Contacts protein L20.

Its function is as follows. This protein binds to 23S rRNA in the presence of protein L20. The chain is Large ribosomal subunit protein bL21 from Hamiltonella defensa subsp. Acyrthosiphon pisum (strain 5AT).